The primary structure comprises 787 residues: Lysine-specific demethylase JMJ13 (787 aa).

Residues 103–144 (CPVYRPTKEEFEDPLTYLQKIFPEASKYGICKIVSPLTATVP) form the JmjN domain. The JmjC domain maps to 250-420 (SSKWNLNKVS…FGAIASCRYA (171 aa)). Residues H293, E295, and H388 each contribute to the Fe cation site. 8 residues coordinate Zn(2+): C500, C503, C514, C516, H519, C522, H525, and C534. The C4HCHC zinc-finger motif lies at 500–551 (CSLCKRDCYLAFINCECYSHPVCLRHDVKKLDLPCGTTHTLYLRDNIEDMEA). Residues 500–551 (CSLCKRDCYLAFINCECYSHPVCLRHDVKKLDLPCGTTHTLYLRDNIEDMEA) form a C5HC2 zinc finger. Residues 617–675 (VMSYEANASCISSVADDYECSDYVNRRANCSSSSDSKLSEEVACSSSKKTRFFPVVQDE) form the FYR N-terminal domain. Residues 677–756 (LVADQESDGS…ELVISNRKET (80 aa)) form the FYR C-terminal domain. The interval 712 to 769 (ESDHHQELKRLKKSHHHEGRYSSSSSVSRQEEEEDELVISNRKETQQQSDVKMQKKRI) is disordered. The Nuclear localization signal signature appears at 752-759 (NRKETQQQ).

It belongs to the JARID1 histone demethylase family. Fe(2+) serves as cofactor. As to expression, mostly expressed in leaves, and, to a lower extent, in inflorescences, roots, siliques and stems.

It is found in the nucleus. It carries out the reaction N(6),N(6),N(6)-trimethyl-L-lysyl(27)-[histone H3] + 2-oxoglutarate + O2 = N(6),N(6)-dimethyl-L-lysyl(27)-[histone H3] + formaldehyde + succinate + CO2. Its function is as follows. Histone demethylase that demethylates 'Lys-27' (H3K27me) of histone H3 with a specific activity for H3K27me3 and involved in the regulation of gene expression. Acts as a temperature and photoperiod dependent flowering repressor. This Arabidopsis thaliana (Mouse-ear cress) protein is Lysine-specific demethylase JMJ13.